The primary structure comprises 468 residues: Argininosuccinate lyase (468 aa).

This sequence belongs to the lyase 1 family. Argininosuccinate lyase subfamily.

Its subcellular location is the cytoplasm. The catalysed reaction is 2-(N(omega)-L-arginino)succinate = fumarate + L-arginine. It participates in amino-acid biosynthesis; L-arginine biosynthesis; L-arginine from L-ornithine and carbamoyl phosphate: step 3/3. The polypeptide is Argininosuccinate lyase (Methanothermobacter thermautotrophicus (strain ATCC 29096 / DSM 1053 / JCM 10044 / NBRC 100330 / Delta H) (Methanobacterium thermoautotrophicum)).